A 133-amino-acid polypeptide reads, in one-letter code: MPEGVEAIEVLVPIYGIESLLTRLKYKQIIDELDYLLKTFKALAQSSRVIIMKPKSEKSWTRVYYLEDLSWCVILGRGGIITSFRVEKDWFKDRLEFYREKLGYEPYGGSPSEELKRSAKRIYDVCRRFRERS.

This is an uncharacterized protein from Aquifex aeolicus (strain VF5).